A 450-amino-acid polypeptide reads, in one-letter code: CBL-interacting protein kinase 23 (450 aa).

The 256-residue stretch at Tyr-13–Phe-268 folds into the Protein kinase domain. Residues Leu-19–Val-27 and Lys-42 each bind ATP. Asp-136 (proton acceptor) is an active-site residue. Residues Asp-154–Glu-183 are activation loop. One can recognise an NAF domain in the interval Glu-306–Glu-331. The PPI stretch occupies residues Lys-339 to Val-368.

The protein belongs to the protein kinase superfamily. CAMK Ser/Thr protein kinase family. SNF1 subfamily. The cofactor is Mn(2+).

It carries out the reaction L-seryl-[protein] + ATP = O-phospho-L-seryl-[protein] + ADP + H(+). The catalysed reaction is L-threonyl-[protein] + ATP = O-phospho-L-threonyl-[protein] + ADP + H(+). CIPK serine-threonine protein kinases interact with CBL proteins. Binding of a CBL protein to the regulatory NAF domain of CIPK protein lead to the activation of the kinase in a calcium-dependent manner. This Oryza sativa subsp. japonica (Rice) protein is CBL-interacting protein kinase 23 (CIPK23).